The following is a 53-amino-acid chain: Mannose/glucose-specific lectin alpha 1 chain (53 aa).

This sequence belongs to the leguminous lectin family. Tetramer of two alpha and two beta chains.

In Lathyrus ochrus (Cyprus-vetch), this protein is Mannose/glucose-specific lectin alpha 1 chain.